Consider the following 442-residue polypeptide: MFLIQEIIRKKRDGKTLSEEEIRFFINGIRDNTVSEGQIAALAMTIYFHDMSMDERVALTLAMRDSGTVLNWKSLNLNGPLVDKHSTGGVGDVTSLMLGPMVAACGGYVPMISGRGLGHTGGTLDKLEAIPGLDIFPNDDHFRRIIQQVGVAIIGQTSSLAPADKRFYATRDITATVDSIPLITASILAKKLAEGLDALVMDVKVGSGAFMPTYELSEQLAQAIVGVANNAGCRTSALLTDMNQVLASSAGNALEVREAVRFLTGESRNPRLYDVTMALCGEMLLAGGLASSADDAHSRLQAVLDNGKAADVFGRMVAAQRGPGDFVEHYDRYLPVATLSKPVFATREGVVTAMDTRALGMAVVSLGGGRRQASDTIDYSVGLDSMISLGERVDAQRPLAVIHANTEAQWQQAANEVRAAIQLGDTAPEKTPMVYRRVSAEA.

This sequence belongs to the thymidine/pyrimidine-nucleoside phosphorylase family. In terms of assembly, homodimer.

The catalysed reaction is thymidine + phosphate = 2-deoxy-alpha-D-ribose 1-phosphate + thymine. Its pathway is pyrimidine metabolism; dTMP biosynthesis via salvage pathway; dTMP from thymine: step 1/2. Functionally, the enzymes which catalyze the reversible phosphorolysis of pyrimidine nucleosides are involved in the degradation of these compounds and in their utilization as carbon and energy sources, or in the rescue of pyrimidine bases for nucleotide synthesis. This is Thymidine phosphorylase from Pectobacterium atrosepticum (strain SCRI 1043 / ATCC BAA-672) (Erwinia carotovora subsp. atroseptica).